A 324-amino-acid polypeptide reads, in one-letter code: UDP-N-acetylenolpyruvoylglucosamine reductase (324 aa).

The FAD-binding PCMH-type domain maps to 36–203 (FRAGGLAELM…THAIFEGYAE (168 aa)). Residue Arg183 is part of the active site. The Proton donor role is filled by Ser232. Residue Glu302 is part of the active site.

The protein belongs to the MurB family. FAD is required as a cofactor.

The protein resides in the cytoplasm. The catalysed reaction is UDP-N-acetyl-alpha-D-muramate + NADP(+) = UDP-N-acetyl-3-O-(1-carboxyvinyl)-alpha-D-glucosamine + NADPH + H(+). Its pathway is cell wall biogenesis; peptidoglycan biosynthesis. Functionally, cell wall formation. The sequence is that of UDP-N-acetylenolpyruvoylglucosamine reductase from Rhizobium meliloti (strain 1021) (Ensifer meliloti).